A 288-amino-acid chain; its full sequence is Serpentine receptor class gamma-1 (288 aa).

7 helical membrane-spanning segments follow: residues 25–45 (LFLQLCYLTPSALFLSRVIYI), 59–79 (FYTIFLADCVTGFILVNFSIF), 118–138 (FQILVQILFVANRASCVLWPL), 148–168 (LKSILTTMAISPCLWIWTIAI), 197–217 (FSILRLTSVITIVVATTTMLI), 238–258 (VYLSVCYLLPAIAEFEYFLVL), and 268–288 (ILHGLVVICWDIQNICSTYVM).

It belongs to the nematode receptor-like protein srg family.

The protein resides in the membrane. The sequence is that of Serpentine receptor class gamma-1 (srg-1) from Caenorhabditis elegans.